We begin with the raw amino-acid sequence, 826 residues long: Putative pentatricopeptide repeat-containing protein At1g13630 (826 aa).

PPR repeat units lie at residues 228–262, 263–297, 298–332, 333–367, 368–402, 404–438, 439–473, 474–508, 509–543, 544–578, 579–613, 614–648, 661–695, 696–730, 731–765, and 766–800; these read NEHTYSTVVDGLCRQQKLEDAVLFLRTSEWKDIGP, SVVSFNSIMSGYCKLGFVDMAKSFFCTVLKCGLVP, SVYSHNILINGLCLVGSIAEALELASDMNKHGVEP, DSVTYNILAKGFHLLGMISGAWEVIRDMLDKGLSP, DVITYTILLCGQCQLGNIDMGLVLLKDMLSRGFEL, SIIPCSVMLSGLCKTGRIDEALSLFNQMKADGLSP, DLVAYSIVIHGLCKLGKFDMALWLYDEMCDKRILP, NSRTHGALLLGLCQKGMLLEARSLLDSLISSGETL, DIVLYNIVIDGYAKSGCIEEALELFKVVIETGITP, SVATFNSLIYGYCKTQNIAEARKILDVIKLYGLAP, SVVSYTTLMDAYANCGNTKSIDELRREMKAEGIPP, TNVTYSVIFKGLCRGWKHENCNHVLRERIFEKCKQ, DQITYNTIIQYLCRVKHLSGAFVFLEIMKSRNLDA, SSATYNILIDSLCVYGYIRKADSFIYSLQEQNVSL, SKFAYTTLIKAHCVKGDPEMAVKLFHQLLHRGFNV, and SIRDYSAVINRLCRRHLVNESKFFFCLMLSQGISP.

This sequence belongs to the PPR family. P subfamily.

The polypeptide is Putative pentatricopeptide repeat-containing protein At1g13630 (Arabidopsis thaliana (Mouse-ear cress)).